A 671-amino-acid polypeptide reads, in one-letter code: MEPIEQQLTELRTTLRHHEYLYHVMDAPEIPDAEYDRLMRELRELEAQRPDLITPDSPTQRVGAAPLTAFNQIRHEVPMLSLDNVFDEESFLAFNKRVQDRLKSTENVIWCCELKLDGLAVSILYENGVLVSAATRGDGTTGEDITSNVRTIRAIPLKLHGDNIPARLEVRGEVFLPQAGFEKINEDARRTGGKVFANPRNAAAGSLRQLDPRITAKRPLTFFCYGVGILEGGELPDTHLGRLLQFKAWGLPVSDRVTLCDSPQAVLDFYRNVEKDRPTLGFDIDGVVIKVNSLALQEQLGFVARAPRWAVAFKFPAQEQMTFVRDVEFQVGRTGAITPVARLEPVQVAGVLVSNATLHNADEIERLGLRIGDKVVIRRAGDVIPQVVNVVLSERPEETRPIVFPTHCPVCGSDVERVEGEAVTRCTGGLICGAQRKESLKHFVSRRAMDVDGMGDKIIDQLVEREYVHTPADLFRLTAGKLTGLDRMGPKSAQNVVNALEKAKATTFARFLYALGIREVGEATAEGLAAYFGTLEALQAATIDELQKVPDVGIVVATHVFNFFAEESNRDVIVQLLAEGVHWPAPVVINVQEIDSPFAGKTVVLTGSLSQMSRDDAKARLVALGAKVAGSVSKKTDLVIAGEAAGSKLAKAQELGITVIDEAEMIRLLGA.

NAD(+) contacts are provided by residues 32–36, 81–82, and Glu-113; these read DAEYD and SL. Lys-115 (N6-AMP-lysine intermediate) is an active-site residue. NAD(+) contacts are provided by Arg-136, Glu-173, Lys-290, and Lys-314. Zn(2+)-binding residues include Cys-408, Cys-411, Cys-426, and Cys-432. The region spanning 593–671 is the BRCT domain; that stretch reads EIDSPFAGKT…EAEMIRLLGA (79 aa).

This sequence belongs to the NAD-dependent DNA ligase family. LigA subfamily. Mg(2+) serves as cofactor. Mn(2+) is required as a cofactor.

The enzyme catalyses NAD(+) + (deoxyribonucleotide)n-3'-hydroxyl + 5'-phospho-(deoxyribonucleotide)m = (deoxyribonucleotide)n+m + AMP + beta-nicotinamide D-nucleotide.. In terms of biological role, DNA ligase that catalyzes the formation of phosphodiester linkages between 5'-phosphoryl and 3'-hydroxyl groups in double-stranded DNA using NAD as a coenzyme and as the energy source for the reaction. It is essential for DNA replication and repair of damaged DNA. The sequence is that of DNA ligase from Salmonella choleraesuis (strain SC-B67).